The primary structure comprises 87 residues: MAKALFFNFCISLLIIAILVSHEIIPTEARHLRTHRKSIKNSTLTVHEGAGGLRTGGGSVKTDISKEEHGVDEFRPTTPGNSPGIGH.

An N-terminal signal peptide occupies residues 1-29 (MAKALFFNFCISLLIIAILVSHEIIPTEA). Positions 30–72 (RHLRTHRKSIKNSTLTVHEGAGGLRTGGGSVKTDISKEEHGVD) are excised as a propeptide. An N-linked (GlcNAc...) asparagine glycan is attached at N41. Residues 41-87 (NSTLTVHEGAGGLRTGGGSVKTDISKEEHGVDEFRPTTPGNSPGIGH) form a disordered region. Gly residues predominate over residues 49–59 (GAGGLRTGGGS). Basic and acidic residues predominate over residues 63–75 (DISKEEHGVDEFR). A hydroxyproline mark is found at P76, P79, and P83.

Belongs to the C-terminally encoded plant signaling peptide (CEP) family. As to quaternary structure, interacts with CEP receptors (e.g. CEPR1 and CEPR2). The mature small signaling peptide is generated by proteolytic processing of the longer precursor. As to expression, expressed in lateral root primordia and in lateral roots excluding the meristem region. Also present in the aerial tissues, such as leaf petioles and the shoot apex region.

The protein localises to the secreted. It localises to the extracellular space. It is found in the apoplast. Functionally, extracellular signaling peptide that may regulate primary root growth rate and systemic nitrogen (N)-demand signaling. Mediates up-regulation of genes involved in N uptake and assimilation pathways. The protein is Precursor of CEP8 of Arabidopsis thaliana (Mouse-ear cress).